The primary structure comprises 671 residues: DNA ligase (671 aa).

Residues 32 to 36 (DAEYD), 81 to 82 (SL), and E113 contribute to the NAD(+) site. K115 serves as the catalytic N6-AMP-lysine intermediate. The NAD(+) site is built by R136, E173, K290, and K314. Residues C408, C411, C426, and C432 each contribute to the Zn(2+) site. Residues 593–671 (EIDSPFAGKT…EAEMIRLLDA (79 aa)) form the BRCT domain.

It belongs to the NAD-dependent DNA ligase family. LigA subfamily. Mg(2+) is required as a cofactor. The cofactor is Mn(2+).

It catalyses the reaction NAD(+) + (deoxyribonucleotide)n-3'-hydroxyl + 5'-phospho-(deoxyribonucleotide)m = (deoxyribonucleotide)n+m + AMP + beta-nicotinamide D-nucleotide.. DNA ligase that catalyzes the formation of phosphodiester linkages between 5'-phosphoryl and 3'-hydroxyl groups in double-stranded DNA using NAD as a coenzyme and as the energy source for the reaction. It is essential for DNA replication and repair of damaged DNA. This chain is DNA ligase, found in Salmonella schwarzengrund (strain CVM19633).